Reading from the N-terminus, the 216-residue chain is FMN-dependent NADH:quinone oxidoreductase 2 (216 aa).

FMN is bound by residues serine 9, 15–17, 96–99, and 140–143; these read SVS, MYNF, and SRGG.

It belongs to the azoreductase type 1 family. As to quaternary structure, homodimer. Requires FMN as cofactor.

The enzyme catalyses 2 a quinone + NADH + H(+) = 2 a 1,4-benzosemiquinone + NAD(+). It catalyses the reaction N,N-dimethyl-1,4-phenylenediamine + anthranilate + 2 NAD(+) = 2-(4-dimethylaminophenyl)diazenylbenzoate + 2 NADH + 2 H(+). Quinone reductase that provides resistance to thiol-specific stress caused by electrophilic quinones. In terms of biological role, also exhibits azoreductase activity. Catalyzes the reductive cleavage of the azo bond in aromatic azo compounds to the corresponding amines. The protein is FMN-dependent NADH:quinone oxidoreductase 2 of Xanthomonas axonopodis pv. citri (strain 306).